The sequence spans 214 residues: Adenylate kinase (214 aa).

10-15 (GAGKGT) serves as a coordination point for ATP. The NMP stretch occupies residues 30-59 (STGDMLRAAVKAGTPLGVKAQEIMIQGGLV). Residues T31, R36, 57–59 (GLV), 85–88 (GFPR), and Q92 each bind AMP. The interval 126 to 163 (GRRSCSSCGKGYHLVFDPPLRAGVCDVCGSGLVQRADD) is LID. Residue R127 coordinates ATP. Zn(2+) contacts are provided by C130, C133, C150, and C153. Positions 160 and 171 each coordinate AMP. An ATP-binding site is contributed by G199.

This sequence belongs to the adenylate kinase family. In terms of assembly, monomer.

The protein resides in the cytoplasm. It catalyses the reaction AMP + ATP = 2 ADP. It participates in purine metabolism; AMP biosynthesis via salvage pathway; AMP from ADP: step 1/1. In terms of biological role, catalyzes the reversible transfer of the terminal phosphate group between ATP and AMP. Plays an important role in cellular energy homeostasis and in adenine nucleotide metabolism. The protein is Adenylate kinase of Trichlorobacter lovleyi (strain ATCC BAA-1151 / DSM 17278 / SZ) (Geobacter lovleyi).